Consider the following 152-residue polypeptide: MSITQSFFVLTLAIFGAASDNPIADRKCIVISDGDLVMHERKPGQEFPYYVYMIPKGTEYDDQRWILESVGGDHYKLKNKFSGRYLVYGTFDYFLTAGAAVREMDHFKFTADGTGKYDISSKANGHPRSRGKNWGVMKDGEKHYFTVENCQE.

Positions 1–18 are cleaved as a signal peptide; that stretch reads MSITQSFFVLTLAIFGAA.

In terms of tissue distribution, salivary gland (at protein level).

Its subcellular location is the secreted. Functionally, salivary vasoactive peptide; induces vasodilatation in bioassay with rabbit aortic rings. The protein is Erythema protein SVEP of Simulium vittatum (Striped black fly).